The sequence spans 938 residues: Glutamate receptor 3.1 (938 aa).

Residues 1–20 (MKFIFYLFSIFCCLCSCAQS) form the signal peptide. The Extracellular segment spans residues 21 to 588 (QNISGRPDAV…GGWAFLQPFT (568 aa)). Asn-22, Asn-39, Asn-59, Asn-340, Asn-418, Asn-436, and Asn-551 each carry an N-linked (GlcNAc...) asparagine glycan. A helical transmembrane segment spans residues 589 to 609 (IKMWTVTGLFFLIIGTVVWML). The Cytoplasmic segment spans residues 610-618 (EHRINDEFR). Residues 619 to 639 (GPPAKQLITVFWFSFSTLFFA) form a helical membrane-spanning segment. The Cytoplasmic portion of the chain corresponds to 640-650 (HREDTRSTLGR). The helical transmembrane segment at 651-671 (FVIIIWLFVVLIIQSSYTASL) threads the bilayer. Topologically, residues 672–830 (TSILTVQQLT…ELDQDPDRLD (159 aa)) are extracellular. A helical membrane pass occupies residues 831 to 851 (VYSFSALFLICGLACIFALAI). Residues 852–938 (HACNLFYQYS…SGSGSTTASC (87 aa)) are Cytoplasmic-facing. The disordered stretch occupies residues 906 to 938 (AAKEKASGLGGSGGSMSGVSFTSSGSGSTTASC). Low complexity predominate over residues 922–938 (SGVSFTSSGSGSTTASC).

This sequence belongs to the glutamate-gated ion channel (TC 1.A.10.1) family. May form homomultimers. In terms of tissue distribution, expressed at low levels in roots and leaves.

It localises to the membrane. Glutamate-gated receptor that probably acts as a non-selective cation channel. Involved in root development. May regulate cell proliferation and cell death in the root apex. In Oryza sativa subsp. japonica (Rice), this protein is Glutamate receptor 3.1 (GLR3.1).